Here is a 448-residue protein sequence, read N- to C-terminus: Dual specificity mitogen-activated protein kinase kinase 5 (448 aa).

Positions 18-25 (VIRIKIPN) are interaction with MAPK7. The PB1 domain maps to 18–109 (VIRIKIPNSG…EPLQIFPRAC (92 aa)). The tract at residues 64–68 (DEDGD) is interaction with MAP3K2/MAP3K3. A disordered region spans residues 116-144 (NIHGLKVNTRAGPSQHTSPVVSDSLPSNS). The interaction with MAPK7 stretch occupies residues 117–131 (IHGLKVNTRAGPSQH). The segment covering 126–144 (AGPSQHTSPVVSDSLPSNS) has biased composition (polar residues). In terms of domain architecture, Protein kinase spans 166-419 (IRYRDTLGHG…PEELMGHPFI (254 aa)). ATP is bound by residues 172–180 (LGHGNGGTV) and K195. The Proton acceptor role is filled by D283. Residue S311 is modified to Phosphoserine. Residue T315 is modified to Phosphothreonine.

The protein belongs to the protein kinase superfamily. STE Ser/Thr protein kinase family. MAP kinase kinase subfamily. As to quaternary structure, interacts with PARD6A, MAP3K3 and MAPK7. Forms a complex with SQSTM1 and PRKCZ or PRKCI. Requires Mg(2+) as cofactor. Activated by phosphorylation on Ser/Thr by MAP kinase kinase kinases. In terms of tissue distribution, expressed in the liver and brain (at protein level). As to expression, expressed in the liver, muscle, testes, lung, kidney, spleen, heart and brain (at protein level).

The protein resides in the cytoplasm. It localises to the cytosol. Its subcellular location is the membrane. It carries out the reaction L-seryl-[protein] + ATP = O-phospho-L-seryl-[protein] + ADP + H(+). The catalysed reaction is L-threonyl-[protein] + ATP = O-phospho-L-threonyl-[protein] + ADP + H(+). It catalyses the reaction L-tyrosyl-[protein] + ATP = O-phospho-L-tyrosyl-[protein] + ADP + H(+). Acts as a scaffold for the formation of a ternary MAP3K2/MAP3K3-MAP3K5-MAPK7 signaling complex. Activation of this pathway appears to play a critical role in protecting cells from stress-induced apoptosis, neuronal survival and cardiac development and angiogenesis. As part of the MAPK/ERK signaling pathway, acts as a negative regulator of apoptosis in cardiomyocytes via promotion of STUB1/CHIP-mediated ubiquitination and degradation of ICER-type isoforms of CREM. The protein is Dual specificity mitogen-activated protein kinase kinase 5 (Map2k5) of Rattus norvegicus (Rat).